The chain runs to 210 residues: Proteasome subunit beta (210 aa).

The propeptide at 1-9 (MNDKNTLKG) is removed in mature form; by autocatalysis. Threonine 10 acts as the Nucleophile in catalysis.

It belongs to the peptidase T1B family. In terms of assembly, the 20S proteasome core is composed of 14 alpha and 14 beta subunits that assemble into four stacked heptameric rings, resulting in a barrel-shaped structure. The two inner rings, each composed of seven catalytic beta subunits, are sandwiched by two outer rings, each composed of seven alpha subunits. The catalytic chamber with the active sites is on the inside of the barrel. Has a gated structure, the ends of the cylinder being occluded by the N-termini of the alpha-subunits. Is capped at one or both ends by the proteasome regulatory ATPase, PAN.

The protein localises to the cytoplasm. It catalyses the reaction Cleavage of peptide bonds with very broad specificity.. With respect to regulation, the formation of the proteasomal ATPase PAN-20S proteasome complex, via the docking of the C-termini of PAN into the intersubunit pockets in the alpha-rings, triggers opening of the gate for substrate entry. Interconversion between the open-gate and close-gate conformations leads to a dynamic regulation of the 20S proteasome proteolysis activity. Functionally, component of the proteasome core, a large protease complex with broad specificity involved in protein degradation. The chain is Proteasome subunit beta from Methanothermobacter thermautotrophicus (strain ATCC 29096 / DSM 1053 / JCM 10044 / NBRC 100330 / Delta H) (Methanobacterium thermoautotrophicum).